The chain runs to 373 residues: Anhydro-N-acetylmuramic acid kinase (373 aa).

ATP is bound at residue 12-19; sequence GTSLDGVD.

Belongs to the anhydro-N-acetylmuramic acid kinase family.

It catalyses the reaction 1,6-anhydro-N-acetyl-beta-muramate + ATP + H2O = N-acetyl-D-muramate 6-phosphate + ADP + H(+). The protein operates within amino-sugar metabolism; 1,6-anhydro-N-acetylmuramate degradation. It participates in cell wall biogenesis; peptidoglycan recycling. Functionally, catalyzes the specific phosphorylation of 1,6-anhydro-N-acetylmuramic acid (anhMurNAc) with the simultaneous cleavage of the 1,6-anhydro ring, generating MurNAc-6-P. Is required for the utilization of anhMurNAc either imported from the medium or derived from its own cell wall murein, and thus plays a role in cell wall recycling. The protein is Anhydro-N-acetylmuramic acid kinase of Salmonella agona (strain SL483).